Consider the following 473-residue polypeptide: Inactive levansucrase (473 aa).

Positions 1 to 29 (MNIKKFAKQATVLTFTTALLAGGATQAFA) are cleaved as a signal peptide.

It belongs to the glycosyl hydrolase 68 family.

It localises to the secreted. In Geobacillus stearothermophilus (Bacillus stearothermophilus), this protein is Inactive levansucrase (sacB).